The following is a 955-amino-acid chain: GPI inositol-deacylase B (955 aa).

N7 is a glycosylation site (N-linked (GlcNAc...) asparagine). Residues 8-28 traverse the membrane as a helical segment; the sequence is ASVALWTVFTILTIWISFALH. S180 is a catalytic residue. Residue N431 is glycosylated (N-linked (GlcNAc...) asparagine). 4 helical membrane-spanning segments follow: residues 489-509, 600-620, 643-663, and 703-723; these read IAFP…SGGV, LLFS…FWRY, YLSW…FEFI, and PIGV…VVVV. N753 is a glycosylation site (N-linked (GlcNAc...) asparagine). The next 3 helical transmembrane spans lie at 772–792, 840–860, and 870–890; these read VIIA…LAFA, TMSV…AVWV, and IFSS…IENL. N914 is a glycosylation site (N-linked (GlcNAc...) asparagine). Residues 919–939 traverse the membrane as a helical segment; that stretch reads GMMHAFMIHHWFNLLAGWLLI. An N-linked (GlcNAc...) asparagine glycan is attached at N945.

The protein belongs to the GPI inositol-deacylase family.

It is found in the endoplasmic reticulum membrane. In terms of biological role, involved in inositol deacylation of GPI-anchored proteins which plays important roles in the quality control and ER-associated degradation of GPI-anchored proteins. This is GPI inositol-deacylase B (BST1B) from Yarrowia lipolytica (strain CLIB 122 / E 150) (Yeast).